A 505-amino-acid polypeptide reads, in one-letter code: Chemotaxis regulatory protein ChePep (505 aa).

Disordered regions lie at residues 154-403 (EPNN…EDIP) and 420-465 (EAVA…SSPL). Composition is skewed to basic and acidic residues over residues 172-263 (EEVK…EKTQ), 289-311 (ENKE…EVVT), 337-346 (QAHELEKQEI), 359-373 (QDKE…KEET), and 386-398 (PQEK…HYES). Positions 440 to 451 (TETSKNENNTET) are enriched in low complexity.

In terms of assembly, interacts with CheZ; the interaction is essential for each other polar localization.

It is found in the cytoplasm. Functionally, plays an essential role in chemotaxis. Regulates flagellar rotation through the formation of a complex with chemotaxis protein CheZ. Plays a major role in colonization of the stomach. The sequence is that of Chemotaxis regulatory protein ChePep from Helicobacter pylori (strain ATCC 700392 / 26695) (Campylobacter pylori).